The following is a 78-amino-acid chain: Small integral membrane protein 1 (78 aa).

Residue M1 is modified to N-acetylmethionine. The disordered stretch occupies residues 1–22; it reads MQSQESGVHYSRWDSSSRDEVS. At 1–48 the chain is on the cytoplasmic side; that stretch reads MQSQESGVHYSRWDSSSRDEVSMTAMSSSEEASCYRRISQKLCSGKLG. A phosphoserine mark is found at S6, S17, S22, and S27. Positions 11–21 are enriched in basic and acidic residues; it reads SRWDSSSRDEV. A helical; Signal-anchor for type II membrane protein transmembrane segment spans residues 49 to 69; it reads IAMKVLGGVALFWIIFILGYI. Topologically, residues 70–78 are extracellular; sequence TGYYVHKCK.

The protein belongs to the SMIM1 family. Homooligomer; disulfide-linked.

It is found in the cell membrane. In terms of biological role, regulator of red blood cell formation. The protein is Small integral membrane protein 1 of Mus musculus (Mouse).